The primary structure comprises 428 residues: Histidine--tRNA ligase (428 aa).

The protein belongs to the class-II aminoacyl-tRNA synthetase family. Homodimer.

The protein resides in the cytoplasm. It carries out the reaction tRNA(His) + L-histidine + ATP = L-histidyl-tRNA(His) + AMP + diphosphate + H(+). This is Histidine--tRNA ligase from Ectopseudomonas mendocina (strain ymp) (Pseudomonas mendocina).